The sequence spans 303 residues: Putative AraC-like transcription regulator (303 aa).

In terms of domain architecture, HTH araC/xylS-type spans 202–300 (ASALTFLHRD…GMNPGDYRKH (99 aa)). 2 consecutive DNA-binding regions (H-T-H motif) follow at residues 219 to 240 (AELA…KATV) and 267 to 290 (LAAI…KRVL).

This Streptomyces antibioticus protein is Putative AraC-like transcription regulator.